A 757-amino-acid polypeptide reads, in one-letter code: Voltage-gated potassium channel KCNC3 (757 aa).

An important for normal N-type inactivation region spans residues 1–78 (MLSSVCVSSF…CPGLPAAAMG (78 aa)). A disordered region spans residues 1–87 (MLSSVCVSSF…GRHGGGGGDS (87 aa)). Residues 1-290 (MLSSVCVSSF…EDPYSSRAAR (290 aa)) are Cytoplasmic-facing. Over residues 21–40 (PAPPPQPPESPPPPPLPPQQ) the composition is skewed to pro residues. The segment covering 41–52 (QQPAQPGPAASP) has biased composition (low complexity). Zn(2+)-binding residues include histidine 157, cysteine 163, cysteine 184, and cysteine 185. The span at 210–219 (AANAANAAGA) shows a compositional bias: low complexity. Positions 210-232 (AANAANAAGAHDGGLDDEAGAGG) are disordered. Residues 291–309 (YVAFASLFFILISITTFCL) form a helical membrane-spanning segment. Asparagine 320 and asparagine 336 each carry an N-linked (GlcNAc...) asparagine glycan. The helical transmembrane segment at 351 to 370 (VEGVCVVWFTFEFLMRITFC) threads the bilayer. Residues 371 to 379 (PDKVEFLKS) are Cytoplasmic-facing. A helical membrane pass occupies residues 380 to 398 (SLNIIDCVAILPFYLEVGL). A helical; Voltage-sensor membrane pass occupies residues 412–434 (FLRVVRFVRILRIFKLTRHFVGL). At 435–447 (RVLGHTLRASTNE) the chain is on the cytoplasmic side. Residues 448 to 469 (FLLLIIFLALGVLIFATMIYYA) form a helical membrane-spanning segment. N-linked (GlcNAc...) asparagine glycosylation is present at asparagine 483. The K(+) site is built by threonine 503, leucine 504, glycine 505, and tyrosine 506. The Selectivity filter motif lies at 503–508 (TLGYGD). The helical transmembrane segment at 518-539 (LVGALCALAGVLTIAMPVPVIV) threads the bilayer. Residues 540–757 (NNFGMYYSLA…NANAAAWISP (218 aa)) are Cytoplasmic-facing. The disordered stretch occupies residues 556–613 (PKKKNKHIPRPPQPGSPNYCKPDPPPPPPPHPHHGSGGISPPPPITPPSMGVTVAGAY). Residue arginine 625 is modified to Omega-N-methylarginine. The tract at residues 682–746 (QPAMSPEDKS…KPGPPSFLPD (65 aa)) is disordered. Residues serine 686 and serine 691 each carry the phosphoserine modification. Residues 728–743 (PPLPPQDWRKPGPPSF) are compositionally biased toward pro residues.

It belongs to the potassium channel family. C (Shaw) (TC 1.A.1.2) subfamily. Kv3.3/KCNC3 sub-subfamily. Homotetramer. Heterotetramer with KCNC1. Interacts (via C-terminus) with HAX1; this interaction modulates channel gating. Identified in a complex with ACTR3, a subunit of the Arp2/3 complex; this interaction is indirect and depends on the presence of HAX1. N-glycosylated.

Its subcellular location is the cell membrane. It is found in the presynaptic cell membrane. It localises to the perikaryon. The protein resides in the cell projection. The protein localises to the axon. Its subcellular location is the dendrite. It is found in the dendritic spine membrane. It localises to the cytoplasm. The protein resides in the cell cortex. The protein localises to the cytoskeleton. The catalysed reaction is K(+)(in) = K(+)(out). Functionally, voltage-gated potassium channel that plays an important role in the rapid repolarization of fast-firing brain neurons. The channel opens in response to the voltage difference across the membrane, forming a potassium-selective channel through which potassium ions pass in accordance with their electrochemical gradient. The channel displays rapid activation and inactivation kinetics. It plays a role in the regulation of the frequency, shape and duration of action potentials in Purkinje cells. Required for normal survival of cerebellar neurons, probably via its role in regulating the duration and frequency of action potentials that in turn regulate the activity of voltage-gated Ca(2+) channels and cellular Ca(2+) homeostasis. Required for normal motor function. Plays a role in the reorganization of the cortical actin cytoskeleton and the formation of actin veil structures in neuronal growth cones via its interaction with HAX1 and the Arp2/3 complex. This is Voltage-gated potassium channel KCNC3 (KCNC3) from Homo sapiens (Human).